The following is a 94-amino-acid chain: Acylphosphatase (94 aa).

Positions 8-94 constitute an Acylphosphatase-like domain; that stretch reads RLTAWVHGRV…REQITGFHER (87 aa). Residues R23 and N41 contribute to the active site.

This sequence belongs to the acylphosphatase family.

It carries out the reaction an acyl phosphate + H2O = a carboxylate + phosphate + H(+). This Mycobacterium sp. (strain JLS) protein is Acylphosphatase (acyP).